The sequence spans 429 residues: Autophagy-related protein 18 (429 aa).

WD repeat units lie at residues Met1–Glu36, Lys69–Thr114, Pro139–Val182, Ala185–Gln225, Ser230–Asp269, Lys309–Lys355, and Val367–Gly407. Residues Phe226–Ser230 carry the L/FRRG motif motif. The segment covering Ser262–Pro275 has biased composition (low complexity). Residues Ser262–Arg308 are disordered.

This sequence belongs to the WD repeat PROPPIN family. In terms of assembly, component of the PI(3,5)P2 regulatory complex.

Its subcellular location is the preautophagosomal structure membrane. It is found in the vacuole membrane. The protein resides in the endosome membrane. The PI(3,5)P2 regulatory complex regulates both the synthesis and turnover of phosphatidylinositol 3,5-bisphosphate (PtdIns(3,5)P2). Necessary for proper vacuole morphology. Plays an important role in osmotically-induced vacuole fragmentation. Required for cytoplasm to vacuole transport (Cvt) vesicle formation, pexophagy and starvation-induced autophagy. Involved in correct atg9 trafficking to the pre-autophagosomal structure. Might also be involved in premeiotic DNA replication. This is Autophagy-related protein 18 (atg18) from Neosartorya fischeri (strain ATCC 1020 / DSM 3700 / CBS 544.65 / FGSC A1164 / JCM 1740 / NRRL 181 / WB 181) (Aspergillus fischerianus).